Here is a 317-residue protein sequence, read N- to C-terminus: MKLGFLIPNHPNEKRVALLPEHVKGFNNELVIETGFGETLGISDAEYVKVGCTIASREEIFKTCEGIFSLKVLKPQDYKHIREGQIIVGWTHPEGSGKIFMEEQGIPKNLIIVDLDNIHPSIYYKDYVIPMEWIPSNFVRKNSYIAGYASTMHAVMNYGSIPTSETKVAILGSGNVSQGAFSAISKFNPDIRMFYRKTMNQLKDELEEFDIIINGIEMDNPNKHILTLEDQMRLKKNCLIIDAAANLGKAIEGARHTTASDPIYNKDGKYYYAVNNSPSIFYRQSSKAISEAFSKHVYSKELEFYLDVIAEVEEMIV.

Positions 15, 71, and 92 each coordinate pyruvate. 172-177 is a binding site for NADP(+); it reads GSGNVS.

Belongs to the AlaDH/PNT family. CEOS subfamily. In terms of assembly, homotetramer.

The catalysed reaction is N(5)-[1(S)-1-carboxyethyl]-L-ornithine + NADP(+) + H2O = L-ornithine + pyruvate + NADPH + H(+). Its function is as follows. Catalyzes the NADPH-dependent reductive condensation between pyruvic acid and the side chain amino group of L-ornithine to form N(5)-(L-1-carboxyethyl)-L-ornithine. To a lesser extent, can also use L-lysine as substrate (yielding N(6)-(L-1-carboxyethyl)-L-lysine), and the D-isomers of the 2 basic amino acids. Can use alpha-keto acids other than pyruvate, e.g. glyoxylate. The sequence is that of N(5)-(carboxyethyl)ornithine synthase (ceo) from Clostridium botulinum (strain Hall / ATCC 3502 / NCTC 13319 / Type A).